The primary structure comprises 185 residues: Hypoxanthine/guanine phosphoribosyltransferase (185 aa).

Belongs to the purine/pyrimidine phosphoribosyltransferase family. Archaeal HPRT subfamily. In terms of assembly, homodimer.

Its subcellular location is the cytoplasm. It catalyses the reaction IMP + diphosphate = hypoxanthine + 5-phospho-alpha-D-ribose 1-diphosphate. The enzyme catalyses GMP + diphosphate = guanine + 5-phospho-alpha-D-ribose 1-diphosphate. Its pathway is purine metabolism; IMP biosynthesis via salvage pathway; IMP from hypoxanthine: step 1/1. Its function is as follows. Catalyzes a salvage reaction resulting in the formation of IMP that is energically less costly than de novo synthesis. The polypeptide is Hypoxanthine/guanine phosphoribosyltransferase (Aciduliprofundum boonei (strain DSM 19572 / T469)).